The primary structure comprises 207 residues: Ribonuclease HII (207 aa).

In terms of domain architecture, RNase H type-2 spans 18 to 206; it reads EFIVGVDEVG…VKNILQLLEK (189 aa). Positions 24, 25, and 115 each coordinate a divalent metal cation.

The protein belongs to the RNase HII family. The cofactor is Mn(2+). Mg(2+) serves as cofactor.

The protein resides in the cytoplasm. It catalyses the reaction Endonucleolytic cleavage to 5'-phosphomonoester.. Functionally, endonuclease that specifically degrades the RNA of RNA-DNA hybrids. The chain is Ribonuclease HII from Hydrogenovibrio crunogenus (strain DSM 25203 / XCL-2) (Thiomicrospira crunogena).